Consider the following 529-residue polypeptide: MQHLRPIRRALLSVSDKAGILEFAKALVERNVELLSTGGTARLLAEAGLPVIEVSDYTGFPEMMDGRVKTLHPKVHGGILGRRGQDDTIMEEHDIRPIDMVVVNLYPFAKTVAHPDCSLADAVENIDIGGPTMVRSAAKNHKDVTIVVNSNDYEKVIEEMDNHQNSLTLDTRFDLAIKAFEHTAAYDSMIANYFGQKVAPYYGDTSQPSGTFPRTLNLNYIKKQDMRYGENAHQQAAFYIEENIEEASIATANQLQGKALSYNNIADTDAALECVKSFSEPACVIVKHANPCGVAIADTLTQAYDNAFKTDPTSAFGGIIAFNRSLDAKTASAVIERQFVEVIIAPSINEDALPILATKPNVRVLACGEWQEAKPALDFKRVNGGLLVQDRDLGMVKEENLRVVTQRQPSEREWKDALFCWKVAKFVKSNAIVYAKNDMTIGIGAGQMSRVYSAKIAGIKAADEGLEVAGCAMASDAFFPFRDGIDAAAMAGVTCVIQPGGSIRDDEVIAAANEHNIAMIFTNMRHFRH.

Residues 2 to 148 (QHLRPIRRAL…KNHKDVTIVV (147 aa)) enclose the MGS-like domain.

Belongs to the PurH family.

The enzyme catalyses (6R)-10-formyltetrahydrofolate + 5-amino-1-(5-phospho-beta-D-ribosyl)imidazole-4-carboxamide = 5-formamido-1-(5-phospho-D-ribosyl)imidazole-4-carboxamide + (6S)-5,6,7,8-tetrahydrofolate. The catalysed reaction is IMP + H2O = 5-formamido-1-(5-phospho-D-ribosyl)imidazole-4-carboxamide. It participates in purine metabolism; IMP biosynthesis via de novo pathway; 5-formamido-1-(5-phospho-D-ribosyl)imidazole-4-carboxamide from 5-amino-1-(5-phospho-D-ribosyl)imidazole-4-carboxamide (10-formyl THF route): step 1/1. It functions in the pathway purine metabolism; IMP biosynthesis via de novo pathway; IMP from 5-formamido-1-(5-phospho-D-ribosyl)imidazole-4-carboxamide: step 1/1. The protein is Bifunctional purine biosynthesis protein PurH of Proteus mirabilis (strain HI4320).